Consider the following 386-residue polypeptide: Hydrazine synthase subunit beta (386 aa).

The signal sequence occupies residues 1–34; sequence MVIRRKMNKMIRKGMIGAVMLGAAVAISGGVATA.

In terms of assembly, part of the hydrazine synthase complex that forms an elongated dimer of heterotrimers composed of one alpha, one beta and one gamma subunit.

It localises to the anammoxosome. It participates in nitrogen metabolism. Component of the hydrazine synthase complex that catalyzes the condensation of nitric oxide (NO) with ammonium to form hydrazine. The beta subunit may play a role in modulating transport of the hydroxylamine intermediate through a tunnel between the gamma and alpha subunit's active site. Is involved in anaerobic ammonium oxidation (anammox), a biological process in which nitrite is used as the electron acceptor in the conversion of ammonium to dinitrogen gas (N2) and water; this bacterial process has a major role in the Earth's nitrogen cycle and has been estimated to synthesize up to 50% of the dinitrogen gas emitted into our atmosphere from the oceans. This is Hydrazine synthase subunit beta from Kuenenia stuttgartiensis.